The sequence spans 485 residues: uncharacterized protein (485 aa).

Transmembrane regions (helical) follow at residues 79–99, 117–137, 139–159, 170–190, 199–219, 275–295, 313–333, 355–375, 380–400, 421–441, and 448–468; these read LVTL…LIFA, VFAL…FLVF, FFSG…LADL, VIYF…SGFI, WEFW…FLLL, ILIC…LVLI, GLMY…AMPI, LPMG…FGWT, IFWF…IMTS, GVKI…ESLF, and WGCT…PILF.

The protein belongs to the major facilitator superfamily. CAR1 family.

Its subcellular location is the golgi apparatus. It localises to the membrane. This is an uncharacterized protein from Schizosaccharomyces pombe (strain 972 / ATCC 24843) (Fission yeast).